The primary structure comprises 106 residues: Guanyl-specific ribonuclease Th1 (106 aa).

Intrachain disulfides connect cysteine 5/cysteine 103 and cysteine 23/cysteine 84. The active site involves histidine 39. Glutamate 58 functions as the Proton acceptor in the catalytic mechanism. Histidine 92 (proton donor) is an active-site residue.

This sequence belongs to the ribonuclease N1/T1 family.

It catalyses the reaction [RNA] containing guanosine + H2O = an [RNA fragment]-3'-guanosine-3'-phosphate + a 5'-hydroxy-ribonucleotide-3'-[RNA fragment].. In Trichoderma harzianum (Hypocrea lixii), this protein is Guanyl-specific ribonuclease Th1.